A 424-amino-acid chain; its full sequence is Zinc metalloprotease RasP (424 aa).

Transmembrane regions (helical) follow at residues 5-25 (VAFI…HLIF), 174-194 (FAGP…LGII), 317-337 (LFML…VGIY), 351-371 (FLLW…VPLP), and 396-416 (EGIF…VVTW). Zn(2+) is bound at residue histidine 18. Residue glutamate 19 is part of the active site. Histidine 22 lines the Zn(2+) pocket. In terms of domain architecture, PDZ spans 184 to 269 (AIAIFLILGI…SQDISVVPGE (86 aa)).

It belongs to the peptidase M50B family. Zn(2+) is required as a cofactor.

It localises to the cell membrane. Functionally, is responsible for Site-2 cleavage of the RsiW anti-sigma factor. This results, after a third proteolytic step catalyzed by the ClpXP protease, in the release of SigW and the transcription activation of the genes under the control of the sigma-W factor. The chain is Zinc metalloprotease RasP (rasP) from Oceanobacillus iheyensis (strain DSM 14371 / CIP 107618 / JCM 11309 / KCTC 3954 / HTE831).